A 78-amino-acid chain; its full sequence is DNA gyrase inhibitor YacG (78 aa).

Zn(2+)-binding residues include C7, C10, C26, and C30.

It belongs to the DNA gyrase inhibitor YacG family. As to quaternary structure, interacts with GyrB. The cofactor is Zn(2+).

Functionally, inhibits all the catalytic activities of DNA gyrase by preventing its interaction with DNA. Acts by binding directly to the C-terminal domain of GyrB, which probably disrupts DNA binding by the gyrase. The polypeptide is DNA gyrase inhibitor YacG (Shewanella piezotolerans (strain WP3 / JCM 13877)).